We begin with the raw amino-acid sequence, 82 residues long: Ubiquinol-cytochrome-c reductase complex assembly factor 3 (82 aa).

Residues methionine 1–arginine 6 are Mitochondrial matrix-facing. Residues isoleucine 7–alanine 29 traverse the membrane as a helical segment. Residues proline 30–serine 82 are Mitochondrial intermembrane-facing.

It belongs to the UQCC3 family. Associates with the ubiquinol-cytochrome c reductase complex (mitochondrial respiratory chain complex III or cytochrome b-c1 complex).

It is found in the mitochondrion inner membrane. Its function is as follows. Required for the assembly of the ubiquinol-cytochrome c reductase complex (mitochondrial respiratory chain complex III or cytochrome b-c1 complex), mediating cytochrome b recruitment and probably stabilization within the complex. Thereby, plays an important role in ATP production by mitochondria. Cardiolipin-binding protein, it may also control the cardiolipin composition of mitochondria membranes and their morphology. The polypeptide is Ubiquinol-cytochrome-c reductase complex assembly factor 3 (Xenopus laevis (African clawed frog)).